Here is a 362-residue protein sequence, read N- to C-terminus: Probable endopolygalacturonase B (362 aa).

The first 20 residues, 1-20 (MHFLQNAFVAATMGAAPAAA), serve as a signal peptide directing secretion. The propeptide occupies 21 to 25 (TPLEK). Cysteines 28 and 43 form a disulfide. PbH1 repeat units lie at residues 155–184 (ADHL…DIGQ), 185–206 (STYI…AINS), 207–227 (GEHI…SIGS), 236–257 (VNDV…RIKT), 265–287 (VENV…VVEQ), and 299–344 (TNGV…DVTG). The active-site Proton donor is Asp-199. The cysteines at positions 201 and 217 are disulfide-linked. Residue His-221 is part of the active site. An intrachain disulfide couples Cys-327 to Cys-332. Asn-334 carries N-linked (GlcNAc...) asparagine glycosylation. Residues Cys-351 and Cys-360 are joined by a disulfide bond.

Belongs to the glycosyl hydrolase 28 family.

It localises to the secreted. It carries out the reaction (1,4-alpha-D-galacturonosyl)n+m + H2O = (1,4-alpha-D-galacturonosyl)n + (1,4-alpha-D-galacturonosyl)m.. Functionally, involved in maceration and soft-rotting of plant tissue. Hydrolyzes the 1,4-alpha glycosidic bonds of de-esterified pectate in the smooth region of the plant cell wall. The chain is Probable endopolygalacturonase B (pgaB) from Aspergillus kawachii (White koji mold).